The primary structure comprises 182 residues: Ribosome maturation factor RimM (182 aa).

Residues glutamine 101–leucine 174 form the PRC barrel domain.

It belongs to the RimM family. Binds ribosomal protein uS19.

Its subcellular location is the cytoplasm. Functionally, an accessory protein needed during the final step in the assembly of 30S ribosomal subunit, possibly for assembly of the head region. Essential for efficient processing of 16S rRNA. May be needed both before and after RbfA during the maturation of 16S rRNA. It has affinity for free ribosomal 30S subunits but not for 70S ribosomes. The chain is Ribosome maturation factor RimM from Roseiflexus sp. (strain RS-1).